Here is a 265-residue protein sequence, read N- to C-terminus: RNA polymerase sigma factor SigI2 (265 aa).

Residues 71–84 (DEFSVGLAAFNEAI) carry the Polymerase core binding motif. The H-T-H motif DNA-binding region spans 211-230 (KTELLKLLKINKKTIERNRT).

The protein belongs to the sigma-70 factor family. SigI subfamily. Interacts with RsgI2.

Its subcellular location is the cytoplasm. With respect to regulation, negatively regulated by the anti-sigma-I factor RsgI2. Binding of the polysaccharide substrate to RsgI2 may lead to the release and activation of SigI2. Functionally, sigma factors are initiation factors that promote the attachment of RNA polymerase to specific initiation sites and are then released. This sigma factor is involved in regulation of cellulosomal genes via an external polysaccharide-sensing mechanism. The chain is RNA polymerase sigma factor SigI2 from Acetivibrio thermocellus (strain ATCC 27405 / DSM 1237 / JCM 9322 / NBRC 103400 / NCIMB 10682 / NRRL B-4536 / VPI 7372) (Clostridium thermocellum).